The chain runs to 266 residues: Nickel import ATP-binding protein NikE (266 aa).

The ABC transporter domain maps to 4-252; the sequence is ISADNIVKIY…RHPASRLLRE (249 aa). An ATP-binding site is contributed by 45 to 52; sequence GRSGCGKS.

The protein belongs to the ABC transporter superfamily. Nickel importer (TC 3.A.1.5.3) family. The complex is composed of two ATP-binding proteins (NikD and NikE), two transmembrane proteins (NikB and NikC) and a solute-binding protein (NikA).

It is found in the cell inner membrane. It catalyses the reaction Ni(2+)(out) + ATP + H2O = Ni(2+)(in) + ADP + phosphate + H(+). Part of the ABC transporter complex NikABCDE involved in nickel import. Responsible for energy coupling to the transport system. This is Nickel import ATP-binding protein NikE from Brucella abortus (strain 2308).